The sequence spans 244 residues: NAD-dependent protein deacylase SIR2rp3 (244 aa).

The Deacetylase sirtuin-type domain maps to 1 to 239; it reads MRRPNGMIAI…PAWADEVLHG (239 aa). 13–32 provides a ligand contact to NAD(+); it reads GAGISAESGISTFRDQNGLW. Residues Tyr-57 and Arg-60 each coordinate substrate. 95 to 98 lines the NAD(+) pocket; sequence QNID. His-113 (proton acceptor) is an active-site residue. Residues Cys-121 and Cys-141 each coordinate Zn(2+). Residues 181 to 183 and Ala-225 each bind NAD(+); that span reads GTS.

This sequence belongs to the sirtuin family. Class III subfamily. Requires Zn(2+) as cofactor.

Its subcellular location is the mitochondrion. It carries out the reaction N(6)-malonyl-L-lysyl-[protein] + NAD(+) + H2O = 2''-O-malonyl-ADP-D-ribose + nicotinamide + L-lysyl-[protein]. The catalysed reaction is N(6)-succinyl-L-lysyl-[protein] + NAD(+) + H2O = 2''-O-succinyl-ADP-D-ribose + nicotinamide + L-lysyl-[protein]. It catalyses the reaction N(6)-glutaryl-L-lysyl-[protein] + NAD(+) + H2O = 2''-O-glutaryl-ADP-D-ribose + nicotinamide + L-lysyl-[protein]. NAD-dependent lysine demalonylase, desuccinylase and deglutarylase that specifically removes malonyl, succinyl and glutaryl groups on target proteins. Has weak NAD-dependent protein deacetylase activity; however this activity may not be physiologically relevant in vivo. The chain is NAD-dependent protein deacylase SIR2rp3 (SIR2rp3) from Trypanosoma brucei brucei (strain 927/4 GUTat10.1).